We begin with the raw amino-acid sequence, 64 residues long: Cytochrome c oxidase subunit 5C (64 aa).

Residues 16 to 34 traverse the membrane as a helical segment; sequence VVKELVIGFSLGLVAGGFW.

This sequence belongs to the cytochrome c oxidase subunit 5C family. As to quaternary structure, sweet potato cytochrome C oxidase consists of at least seven different polypeptides species, subunits I, II, III, IV, Va, Vb, and Vc in order of MW.

The protein localises to the mitochondrion inner membrane. In terms of biological role, this protein is one of the nuclear-coded polypeptide chains of cytochrome c oxidase, the terminal oxidase in mitochondrial electron transport. In Ipomoea batatas (Sweet potato), this protein is Cytochrome c oxidase subunit 5C (COX5C).